The chain runs to 520 residues: Nuclear GTP-binding protein NUG1 (520 aa).

2 stretches are compositionally biased toward basic residues: residues 1–13 (MRVR…RTST) and 21–34 (KKAS…KKMA). The tract at residues 1-53 (MRVRKRQSRRTSTKLKEGIKKKASAHRKKEKKMAKKDVTWRSRSKKDPGIPSN) is disordered. A compositionally biased stretch (basic and acidic residues) spans 35-48 (KKDVTWRSRSKKDP). Residues 165-343 (YDKIFKSVID…ILDSPGICFP (179 aa)) form the CP-type G domain. GTP contacts are provided by residues 213–216 (NKVD), 287–294 (GYPNVGKS), and 336–339 (DSPG). Ser-337 is subject to Phosphoserine.

Belongs to the TRAFAC class YlqF/YawG GTPase family.

The protein resides in the nucleus. GTPase required for 60S ribosomal subunit export to the cytoplasm. The protein is Nuclear GTP-binding protein NUG1 (NUG1) of Saccharomyces cerevisiae (strain ATCC 204508 / S288c) (Baker's yeast).